We begin with the raw amino-acid sequence, 278 residues long: Dermonecrotic toxin LspiSicTox-betaIE2iii (278 aa).

H5 is a catalytic residue. E25 and D27 together coordinate Mg(2+). H41 functions as the Nucleophile in the catalytic mechanism. Disulfide bonds link C45–C51 and C47–C190. Mg(2+) is bound at residue D85.

Belongs to the arthropod phospholipase D family. Class II subfamily. It depends on Mg(2+) as a cofactor. In terms of tissue distribution, expressed by the venom gland.

It is found in the secreted. The catalysed reaction is an N-(acyl)-sphingosylphosphocholine = an N-(acyl)-sphingosyl-1,3-cyclic phosphate + choline. It catalyses the reaction an N-(acyl)-sphingosylphosphoethanolamine = an N-(acyl)-sphingosyl-1,3-cyclic phosphate + ethanolamine. The enzyme catalyses a 1-acyl-sn-glycero-3-phosphocholine = a 1-acyl-sn-glycero-2,3-cyclic phosphate + choline. It carries out the reaction a 1-acyl-sn-glycero-3-phosphoethanolamine = a 1-acyl-sn-glycero-2,3-cyclic phosphate + ethanolamine. In terms of biological role, dermonecrotic toxins cleave the phosphodiester linkage between the phosphate and headgroup of certain phospholipids (sphingolipid and lysolipid substrates), forming an alcohol (often choline) and a cyclic phosphate. This toxin acts on sphingomyelin (SM). It may also act on ceramide phosphoethanolamine (CPE), lysophosphatidylcholine (LPC) and lysophosphatidylethanolamine (LPE), but not on lysophosphatidylserine (LPS), and lysophosphatidylglycerol (LPG). It acts by transphosphatidylation, releasing exclusively cyclic phosphate products as second products. Induces dermonecrosis, hemolysis, increased vascular permeability, edema, inflammatory response, and platelet aggregation. This chain is Dermonecrotic toxin LspiSicTox-betaIE2iii, found in Loxosceles spinulosa (Recluse spider).